The following is a 1778-amino-acid chain: Ankyrin repeat domain-containing protein 36C (1778 aa).

ANK repeat units lie at residues 64-93, 97-126, 130-159, 163-192, and 196-225; these read KERT…ELNL, EDRT…DPNI, FGRT…NIEE, DEYP…NINA, and LGRS…DVFS. Disordered stretches follow at residues 260–365, 501–526, 538–653, 671–1027, and 1051–1072; these read LSIN…DEQK, ALPA…VKDS, DSLT…QKQS, RITG…QKQL, and IRGT…EKDS. 2 stretches are compositionally biased toward polar residues: residues 261 to 272 and 297 to 306; these read SINSNPVSSQKQ and KSGTVSSQKQ. The segment covering 539–555 has biased composition (low complexity); sequence SLTSSEESSERPPLSTL. Composition is skewed to basic and acidic residues over residues 585-596 and 619-630; these read PAEKATSDDKDS and PAEKATSDEKDS. Polar residues-rich tracts occupy residues 631-653 and 679-691; these read VSNI…QKQS and GTVS…PSKA. Residues 794–813 are compositionally biased toward basic and acidic residues; the sequence is TSDEKDSFSNITREKKDGEI. Residue Ser829 is modified to Phosphoserine. 2 stretches are compositionally biased toward basic and acidic residues: residues 840–849 and 862–881; these read RGKEDGEKTR and TSDE…DGET. Ser897 is modified (phosphoserine). Over residues 907–917 the composition is skewed to basic and acidic residues; sequence AREKKDGEKSR. Positions 942 to 955 are enriched in basic residues; the sequence is RGKKHGEKTRRVSS. Polar residues-rich tracts occupy residues 983 to 992 and 1005 to 1026; these read ISGTVSSQKQ and VSNI…SQKQ. Coiled-coil stretches lie at residues 1157–1187, 1247–1333, 1362–1480, and 1544–1768; these read EQDL…QIHS, ELKD…YRIE, SETD…DHDQ, and VFEH…ILQH.

This sequence belongs to the ANKRD36 family.

This Homo sapiens (Human) protein is Ankyrin repeat domain-containing protein 36C (ANKRD36C).